The chain runs to 222 residues: Vesicle transport v-SNARE 12 (222 aa).

N-acetylserine is present on serine 2. Residues 2-199 lie on the Cytoplasmic side of the membrane; that stretch reads SDVFEGYERQ…MSRRMTRNKW (198 aa). The stretch at 68-95 forms a coiled coil; the sequence is KAVCLSKLREYKSDLNQLKKEFKRVSSA. The helical; Anchor for type IV membrane protein transmembrane segment at 200 to 220 threads the bilayer; it reads IITSVIVALVLAIILIISYKL. Residues 221–222 lie on the Vesicular side of the membrane; sequence SH.

It belongs to the VTI1 family. Forms SNARE complexes with the t-SNAREs SYP61 and either SYP41 or SYP42, and with a much lower affinity with SYP51 in the TGN. Also interacts with VPS45, a Sec1 protein, but not with SYP21 or SYP22. Binds to EPSIN2. Core constituent of the SNARE complex required for membrane fusion at the trans-Golgi network. Interacts with SCYL2B. In terms of tissue distribution, expressed in roots, stems, flowers and leaves.

The protein resides in the golgi apparatus. It localises to the trans-Golgi network membrane. Its subcellular location is the prevacuolar compartment membrane. It is found in the cell membrane. In terms of biological role, together with either SYP41 or SYP61, required for membrane fusion; the fusion of phospholipid vesicles containing SYP41 or SYP61 and VTI12 is triggered by YKT61 and YKT62. Functions as a v-SNARE responsible for the docking or fusion of transport vesicles within the trans-Golgi network (TGN) and mediates liposome fusion. Necessary to deliver proteins to the protein storage vacuole (PSV). May be also involved in retrograde traffic to the cis-Golgi. This chain is Vesicle transport v-SNARE 12, found in Arabidopsis thaliana (Mouse-ear cress).